A 357-amino-acid chain; its full sequence is Tetraacyldisaccharide 4'-kinase (357 aa).

49–56 (TIGGTGKT) contributes to the ATP binding site.

Belongs to the LpxK family.

It catalyses the reaction a lipid A disaccharide + ATP = a lipid IVA + ADP + H(+). It functions in the pathway glycolipid biosynthesis; lipid IV(A) biosynthesis; lipid IV(A) from (3R)-3-hydroxytetradecanoyl-[acyl-carrier-protein] and UDP-N-acetyl-alpha-D-glucosamine: step 6/6. In terms of biological role, transfers the gamma-phosphate of ATP to the 4'-position of a tetraacyldisaccharide 1-phosphate intermediate (termed DS-1-P) to form tetraacyldisaccharide 1,4'-bis-phosphate (lipid IVA). This chain is Tetraacyldisaccharide 4'-kinase, found in Porphyromonas gingivalis (strain ATCC BAA-308 / W83).